We begin with the raw amino-acid sequence, 193 residues long: Chaperone protein TorD (193 aa).

Belongs to the TorD/DmsD family. TorD subfamily.

It is found in the cytoplasm. Involved in the biogenesis of TorA. Acts on TorA before the insertion of the molybdenum cofactor and, as a result, probably favors a conformation of the apoenzyme that is competent for acquiring the cofactor. This Actinobacillus succinogenes (strain ATCC 55618 / DSM 22257 / CCUG 43843 / 130Z) protein is Chaperone protein TorD.